We begin with the raw amino-acid sequence, 699 residues long: Elongation factor G (699 aa).

In terms of domain architecture, tr-type G spans 8-290; it reads ERYRNIGIMA…AVLDYLPSPV (283 aa). Residues 17 to 24, 88 to 92, and 142 to 145 contribute to the GTP site; these read AHIDAGKT, DTPGH, and NKMD.

The protein belongs to the TRAFAC class translation factor GTPase superfamily. Classic translation factor GTPase family. EF-G/EF-2 subfamily.

The protein resides in the cytoplasm. Functionally, catalyzes the GTP-dependent ribosomal translocation step during translation elongation. During this step, the ribosome changes from the pre-translocational (PRE) to the post-translocational (POST) state as the newly formed A-site-bound peptidyl-tRNA and P-site-bound deacylated tRNA move to the P and E sites, respectively. Catalyzes the coordinated movement of the two tRNA molecules, the mRNA and conformational changes in the ribosome. The polypeptide is Elongation factor G (Acidithiobacillus ferrooxidans (strain ATCC 23270 / DSM 14882 / CIP 104768 / NCIMB 8455) (Ferrobacillus ferrooxidans (strain ATCC 23270))).